A 275-amino-acid polypeptide reads, in one-letter code: Autophagy protein 5 (275 aa).

Position 1 is an N-acetylmethionine (methionine 1). Residue lysine 130 forms a Glycyl lysine isopeptide (Lys-Gly) (interchain with G-Cter in ATG12) linkage.

The protein belongs to the ATG5 family. Forms a conjugate with ATG12. Part of the minor complex composed of 4 sets of ATG12-ATG5 and ATG16L1 (400 kDa); this complex interacts with ATG3 leading to disruption of ATG7 interaction and promotion of ATG8-like proteins lipidation. Forms an 800-kDa complex composed of ATG12-ATG5 and ATG16L2. The ATG12-ATG5 conjugate interacts with RAB33A; this interaction is bridged by ATG16L1 and promotes ATG12-ATG5-ATG16L1 complex recruitment to phagophores. Interacts with TECPR1; the interaction is direct and does not take place when ATG16L1 is associated with the ATG5-ATG12 conjugate. Interacts with DHX58/RIG-1, IFIH1/MDA5 and MAVS/IPS-1 in monomeric form as well as in ATG12-ATG5 conjugate form. The interaction with MAVS is further enhanced upon vesicular stomatitis virus (VSV) infection. Interacts with ATG3. Interacts with ATG7 and ATG10. Interacts with FADD. Interacts with Bassoon/BSN; this interaction is important for the regulation of presynaptic autophagy. Interacts with ATG16L2. In terms of processing, conjugated to ATG12; which is essential for autophagy, but is not required for association with isolation membrane. Acetylated by EP300.

It is found in the cytoplasm. The protein localises to the preautophagosomal structure membrane. Its function is as follows. Involved in autophagic vesicle formation. Conjugation with ATG12, through a ubiquitin-like conjugating system involving ATG7 as an E1-like activating enzyme and ATG10 as an E2-like conjugating enzyme, is essential for its function. The ATG12-ATG5 conjugate acts as an E3-like enzyme which is required for lipidation of ATG8 family proteins and their association to the vesicle membranes. Involved in mitochondrial quality control after oxidative damage, and in subsequent cellular longevity. Plays a critical role in multiple aspects of lymphocyte development and is essential for both B and T lymphocyte survival and proliferation. Required for optimal processing and presentation of antigens for MHC II. Involved in the maintenance of axon morphology and membrane structures, as well as in normal adipocyte differentiation. Promotes primary ciliogenesis through removal of OFD1 from centriolar satellites and degradation of IFT20 via the autophagic pathway. As part of the ATG8 conjugation system with ATG12 and ATG16L1, required for recruitment of LRRK2 to stressed lysosomes and induction of LRRK2 kinase activity in response to lysosomal stress. In terms of biological role, may play an important role in the apoptotic process, possibly within the modified cytoskeleton. Its expression is a relatively late event in the apoptotic process, occurring downstream of caspase activity. Plays a crucial role in IFN-gamma-induced autophagic cell death by interacting with FADD. The sequence is that of Autophagy protein 5 from Sus scrofa (Pig).